The following is a 305-amino-acid chain: UDP-3-O-acyl-N-acetylglucosamine deacetylase (305 aa).

The Zn(2+) site is built by H79, H238, and D242. The active-site Proton donor is the H265.

The protein belongs to the LpxC family. The cofactor is Zn(2+).

It catalyses the reaction a UDP-3-O-[(3R)-3-hydroxyacyl]-N-acetyl-alpha-D-glucosamine + H2O = a UDP-3-O-[(3R)-3-hydroxyacyl]-alpha-D-glucosamine + acetate. It functions in the pathway glycolipid biosynthesis; lipid IV(A) biosynthesis; lipid IV(A) from (3R)-3-hydroxytetradecanoyl-[acyl-carrier-protein] and UDP-N-acetyl-alpha-D-glucosamine: step 2/6. In terms of biological role, catalyzes the hydrolysis of UDP-3-O-myristoyl-N-acetylglucosamine to form UDP-3-O-myristoylglucosamine and acetate, the committed step in lipid A biosynthesis. This is UDP-3-O-acyl-N-acetylglucosamine deacetylase from Citrobacter koseri (strain ATCC BAA-895 / CDC 4225-83 / SGSC4696).